The primary structure comprises 294 residues: 33 kDa chaperonin (294 aa).

Disulfide bonds link C239-C241 and C272-C275.

The protein belongs to the HSP33 family. Under oxidizing conditions two disulfide bonds are formed involving the reactive cysteines. Under reducing conditions zinc is bound to the reactive cysteines and the protein is inactive.

It localises to the cytoplasm. Its function is as follows. Redox regulated molecular chaperone. Protects both thermally unfolding and oxidatively damaged proteins from irreversible aggregation. Plays an important role in the bacterial defense system toward oxidative stress. This is 33 kDa chaperonin from Listeria monocytogenes serotype 4a (strain HCC23).